Consider the following 69-residue polypeptide: Large ribosomal subunit protein bL32c (69 aa).

Belongs to the bacterial ribosomal protein bL32 family.

Its subcellular location is the plastid. It localises to the chloroplast. In Marchantia polymorpha (Common liverwort), this protein is Large ribosomal subunit protein bL32c (rpl32).